The sequence spans 840 residues: Kinesin-like protein KIN-14J (840 aa).

The interval 1-74 is disordered; that stretch reads MEADPAPSST…KGEEPVVSAE (74 aa). Positions 177-501 constitute a Kinesin motor domain; the sequence is NIRVFCRCRP…LNFASRVRAI (325 aa). An ATP-binding site is contributed by 260–267; that stretch reads GQTGTGKT. The stretch at 517–594 forms a coiled coil; the sequence is KLKQMTEKIR…KKAARDTARS (78 aa). Over residues 581 to 593 the composition is skewed to basic and acidic residues; the sequence is LANEKKAARDTAR. Residues 581-617 form a disordered region; the sequence is LANEKKAARDTARSTKPPLAPMRQRPPLGRIGNHIPP.

Belongs to the TRAFAC class myosin-kinesin ATPase superfamily. Kinesin family. KIN-14 subfamily.

This Oryza sativa subsp. japonica (Rice) protein is Kinesin-like protein KIN-14J.